A 295-amino-acid chain; its full sequence is Mycothiol acetyltransferase (295 aa).

N-acetyltransferase domains lie at 4 to 138 (TEWR…RPLT) and 149 to 295 (VRIA…YAAN). D36 provides a ligand contact to 1D-myo-inositol 2-(L-cysteinylamino)-2-deoxy-alpha-D-glucopyranoside. Acetyl-CoA contacts are provided by residues 77-79 (LVV) and 85-90 (RRGIGA). Positions 176, 217, and 225 each coordinate 1D-myo-inositol 2-(L-cysteinylamino)-2-deoxy-alpha-D-glucopyranoside. Residues 229 to 231 (VGV) and 236 to 242 (QGRGLGY) contribute to the acetyl-CoA site. A 1D-myo-inositol 2-(L-cysteinylamino)-2-deoxy-alpha-D-glucopyranoside-binding site is contributed by Y266. 271 to 276 (NSAAVN) contributes to the acetyl-CoA binding site.

This sequence belongs to the acetyltransferase family. MshD subfamily. Monomer.

The catalysed reaction is 1D-myo-inositol 2-(L-cysteinylamino)-2-deoxy-alpha-D-glucopyranoside + acetyl-CoA = mycothiol + CoA + H(+). Functionally, catalyzes the transfer of acetyl from acetyl-CoA to desacetylmycothiol (Cys-GlcN-Ins) to form mycothiol. This is Mycothiol acetyltransferase (mshD) from Mycolicibacterium smegmatis (strain ATCC 700084 / mc(2)155) (Mycobacterium smegmatis).